Reading from the N-terminus, the 147-residue chain is DNA base-flipping protein (147 aa).

The protein belongs to the MGMT family. ATL subfamily. As to quaternary structure, interacts with several proteins, including UvrA, UvrD and the three subunits of the RNA polymerase.

Involved in DNA damage recognition. Binds DNA containing O(6)-methylguanine and larger O(6)-alkylguanine adducts. Binds to the damaged base and flips the base out of the DNA duplex into an extrahelical conformation, which allows processing by repair proteins. Also affects the regulation of gene expression in response to alkylation. This chain is DNA base-flipping protein, found in Thermus thermophilus (strain ATCC 27634 / DSM 579 / HB8).